The following is a 95-amino-acid chain: Endoribonuclease VapD homolog (95 aa).

It belongs to the VapD ribonuclease family. In terms of assembly, homodimer.

Cleaves ssRNA, mostly between U:A. This chain is Endoribonuclease VapD homolog, found in Helicobacter pylori (strain ATCC 700392 / 26695) (Campylobacter pylori).